An 837-amino-acid polypeptide reads, in one-letter code: Semaphorin-4B (837 aa).

An N-terminal signal peptide occupies residues 1–43; it reads MLRTAMGLRSWLAAPWGALPPRPPLLLLLLLLLLLQPPPPTWA. Topologically, residues 44 to 717 are extracellular; that stretch reads LSPRISLPLG…WGADRSYWKE (674 aa). The Sema domain occupies 47 to 523; that stretch reads RISLPLGSEE…SHSGVVQVPM (477 aa). N69 and N96 each carry an N-linked (GlcNAc...) asparagine glycan. Cystine bridges form between C120-C131 and C149-C158. An N-linked (GlcNAc...) asparagine glycan is attached at N165. 2 cysteine pairs are disulfide-bonded: C286/C399 and C310/C359. N410 and N525 each carry an N-linked (GlcNAc...) asparagine glycan. In terms of domain architecture, PSI spans 525 to 579; the sequence is NCSLYRSCGDCLLARDPYCAWSGSSCKHVSLYQPQLATRPWIQDIEGASAKDLCS. Intrachain disulfides connect C526–C543 and C611–C656. The Ig-like C2-type domain maps to 604-663; the sequence is NTVNTLACPLLSNLATRLWLRNGAPVNASASCHVLPTGDLLLVGTQQLGEFQCWSLEEGF. Residue N630 is glycosylated (N-linked (GlcNAc...) asparagine). Residues 718–738 form a helical membrane-spanning segment; that stretch reads FLVMCTLFVLAVLLPVLFLLY. Residues 739-837 are Cytoplasmic-facing; the sequence is RHRNSMKVFL…LGSEIRDSVV (99 aa). Residues 767-805 form a disordered region; sequence PETRPLNGLGPPSTPLDHRGYQSLSDSPPGSRVFTESEK. S793, S818, and S830 each carry phosphoserine.

It belongs to the semaphorin family.

It is found in the membrane. Its function is as follows. Inhibits axonal extension by providing local signals to specify territories inaccessible for growing axons. This chain is Semaphorin-4B, found in Homo sapiens (Human).